Here is a 208-residue protein sequence, read N- to C-terminus: 3-isopropylmalate dehydratase small subunit 2 (208 aa).

Residues glutamate 163–alanine 208 form a disordered region.

The protein belongs to the LeuD family. LeuD type 2 subfamily. In terms of assembly, heterodimer of LeuC and LeuD.

The catalysed reaction is (2R,3S)-3-isopropylmalate = (2S)-2-isopropylmalate. The protein operates within amino-acid biosynthesis; L-leucine biosynthesis; L-leucine from 3-methyl-2-oxobutanoate: step 2/4. Catalyzes the isomerization between 2-isopropylmalate and 3-isopropylmalate, via the formation of 2-isopropylmaleate. The chain is 3-isopropylmalate dehydratase small subunit 2 (leuD2) from Deinococcus radiodurans (strain ATCC 13939 / DSM 20539 / JCM 16871 / CCUG 27074 / LMG 4051 / NBRC 15346 / NCIMB 9279 / VKM B-1422 / R1).